The chain runs to 353 residues: uncharacterized protein (353 aa).

Disordered regions lie at residues 1-24 (MSTS…QQSQ), 245-280 (NKSS…EKVP), and 305-353 (AAGK…DLNN). Residues 9 to 24 (NKKNNTKQQKYQQQSQ) show a composition bias toward low complexity. Residues 254–280 (KSGDKSTVKSTDKQVEKKVEESSEKVP) are compositionally biased toward basic and acidic residues. The span at 321–332 (VTTSTSESTVEV) shows a compositional bias: low complexity. Positions 342-353 (EPDEEVFEDLNN) are enriched in acidic residues.

This is an uncharacterized protein from Acanthamoeba polyphaga mimivirus (APMV).